The sequence spans 144 residues: Toxin MT0934 (144 aa).

In terms of biological role, toxic component of a type II toxin-antitoxin (TA) system. Its toxic effect is neutralized by coexpression with cognate antitoxin MT0933. This is Toxin MT0934 from Mycobacterium tuberculosis (strain CDC 1551 / Oshkosh).